The sequence spans 128 residues: MKKMLVEFRDFALKGNVLDLAVAVVIGAAFGKIVSSLVNNIIMPFVGVLLGGLDFSDLSFKVGKSVIQYGAFIQSIVDFVIIAFAIFIFVKVLTSFIKKKEQPTEETPVPPTEEYLKEIRDLLKEQQK.

Transmembrane regions (helical) follow at residues 11–31 (FALK…AAFG) and 70–90 (GAFI…FIFV).

It belongs to the MscL family. In terms of assembly, homopentamer.

The protein resides in the cell membrane. Channel that opens in response to stretch forces in the membrane lipid bilayer. May participate in the regulation of osmotic pressure changes within the cell. The polypeptide is Large-conductance mechanosensitive channel (Listeria innocua serovar 6a (strain ATCC BAA-680 / CLIP 11262)).